The primary structure comprises 113 residues: U11-theraphotoxin-Hhn1a (113 aa).

The N-terminal stretch at 1–21 (MNTVRATFLLVFVLAVSLGQA) is a signal peptide. Positions 22–74 (DKDENRMEMQEKTEQGKSYLDFAENLLLQKLEELEAKLLEEDSEESRNSRQKR) are excised as a propeptide. A compositionally biased stretch (basic and acidic residues) spans 60–69 (LEEDSEESRN). The tract at residues 60–82 (LEEDSEESRNSRQKRCIGEGVPC) is disordered. Disulfide bonds link cysteine 75–cysteine 90, cysteine 82–cysteine 95, and cysteine 89–cysteine 110.

It belongs to the neurotoxin 14 (magi-1) family. 01 (HNTX-16) subfamily. In terms of tissue distribution, expressed by the venom gland.

Its subcellular location is the secreted. Probable ion channel inhibitor. The sequence is that of U11-theraphotoxin-Hhn1a from Cyriopagopus hainanus (Chinese bird spider).